The chain runs to 3418 residues: Breast cancer type 2 susceptibility protein (3418 aa).

Residues 1 to 40 are interaction with PALB2; the sequence is MPIGSKERPTFFEIFKTRCNKADLGPISLNWFEELSSEAP. A disordered region spans residues 37 to 68; that stretch reads SEAPPYNSEPAEESEHKNNNYEPNLFKTPQRK. Position 70 is a phosphoserine (Ser70). Positions 358-381 are disordered; that stretch reads VEPNDTDPLDSNVANQKPFESGSD. Phosphoserine occurs at positions 445, 492, and 755. The interaction with NPM1 stretch occupies residues 639–1000; that stretch reads LHSSVKRSCS…NKWAGLLGPI (362 aa). BRCA2 repeat units lie at residues 1002–1036, 1212–1246, 1421–1455, 1517–1551, 1664–1698, and 1837–1871; these read NHSF…DIEE, NEVG…DIEN, FETS…QKPE, KEPT…EKEQ, IENS…EGIF, and FEVG…DSFS. Positions 1003–2082 are interaction with RAD51; it reads HSFGGSFRTA…LHKVKGVLEE (1080 aa). Positions 1338–1781 are interaction with POLH; it reads GSDSSKNDTV…IEPVLKNVED (444 aa). Residues 1410–1595 form a required for stimulation of POLH DNA polymerization activity region; sequence TATKTEQNIK…TAAPKCKEMQ (186 aa). Ser1970 is subject to Phosphoserine. Residues 1971–2005 form a BRCA2 7 repeat; that stretch reads SANTCGIFSTASGKSVQVSDASLQNARQVFSEIED. Position 2035 is a phosphothreonine (Thr2035). The stretch at 2051–2085 is one BRCA2 8 repeat; it reads NSSAFSGFSTASGKQVSILESSLHKVKGVLEEFDL. Residue Ser2095 is modified to Phosphoserine. Residues 2270–2337 form an interaction with HSF2BP region; sequence GKRRGEPLIL…EPITCVPFRT (68 aa). An interaction with FANCD2 region spans residues 2350–2545; it reads TAPGQEFLSK…SHKQLYTYGV (196 aa). Residues 2430 to 2450 form a disordered region; that stretch reads ENRQKQNIDGHGSDDSKNKIN. Positions 2481–2832 are interaction with SEM1; the sequence is ITSLQNARDI…QRAYPIQWME (352 aa). The Nuclear export signal; masked by interaction with SEM1 signature appears at 2682-2698; the sequence is AAKTLVLCVSDIISLSA. Ser3291 bears the Phosphoserine; by CDK1 and CDK2 mark. A Phosphoserine modification is found at Ser3319. Thr3387 is subject to Phosphothreonine; by CHEK1 and CHEK2. The disordered stretch occupies residues 3393–3418; that stretch reads EQESSQASTEECEKNKQDTITTKKYI.

Monomer and dimer. Interacts with RAD51; regulates RAD51 recruitment and function at sites of DNA repair. Interacts with WDR16, USP11, DMC1, ROCK2 and NPM1. Interacts with SEM1; the interaction masks a nuclear export signal in BRCA2. Interacts with both nonubiquitinated and monoubiquitinated FANCD2; this complex also includes XRCC3 and phosphorylated FANCG. Part of a BRCA complex containing BRCA1, BRCA2 and PALB2. Component of the homologous recombination repair (HR) complex composed of ERCC5/XPG, BRCA2, PALB2, DSS1 and RAD51. Within the complex, interacts with ERCC5/XPG and PALB2. Interacts directly with PALB2 which may serve as a scaffold for a HR complex containing PALB2, BRCA2, RAD51C, RAD51 and XRCC3. Interacts with BRCA1 only in the presence of PALB2 which serves as the bridging protein. Interacts with POLH; the interaction is direct. Interacts with the TREX-2 complex subunits PCID2 and SEM1. Interacts with HSF2BP and BRME1; the interaction with HSF2BP is direct and allows the formation of a ternary complex. The complex BRME1:HSF2BP:BRCA2 interacts with SPATA22, MEIOB and RAD51. In terms of processing, phosphorylated by ATM upon irradiation-induced DNA damage. Phosphorylation by CHEK1 and CHEK2 regulates interaction with RAD51. Phosphorylation at Ser-3291 by CDK1 and CDK2 is low in S phase when recombination is active, but increases as cells progress towards mitosis; this phosphorylation prevents homologous recombination-dependent repair during S phase and G2 by inhibiting RAD51 binding. Ubiquitinated in the absence of DNA damage; this does not lead to proteasomal degradation. In contrast, ubiquitination in response to DNA damage leads to proteasomal degradation. As to expression, highest levels of expression in breast and thymus, with slightly lower levels in lung, ovary and spleen.

The protein resides in the nucleus. It is found in the cytoplasm. It localises to the cytoskeleton. Its subcellular location is the microtubule organizing center. The protein localises to the centrosome. In terms of biological role, involved in double-strand break repair and/or homologous recombination. Binds RAD51 and potentiates recombinational DNA repair by promoting assembly of RAD51 onto single-stranded DNA (ssDNA). Acts by targeting RAD51 to ssDNA over double-stranded DNA, enabling RAD51 to displace replication protein-A (RPA) from ssDNA and stabilizing RAD51-ssDNA filaments by blocking ATP hydrolysis. Part of a PALB2-scaffolded HR complex containing RAD51C and which is thought to play a role in DNA repair by HR. May participate in S phase checkpoint activation. Binds selectively to ssDNA, and to ssDNA in tailed duplexes and replication fork structures. May play a role in the extension step after strand invasion at replication-dependent DNA double-strand breaks; together with PALB2 is involved in both POLH localization at collapsed replication forks and DNA polymerization activity. In concert with NPM1, regulates centrosome duplication. Interacts with the TREX-2 complex (transcription and export complex 2) subunits PCID2 and SEM1, and is required to prevent R-loop-associated DNA damage and thus transcription-associated genomic instability. Silencing of BRCA2 promotes R-loop accumulation at actively transcribed genes in replicating and non-replicating cells, suggesting that BRCA2 mediates the control of R-loop associated genomic instability, independently of its known role in homologous recombination. This chain is Breast cancer type 2 susceptibility protein, found in Homo sapiens (Human).